Consider the following 55-residue polypeptide: Trypsin inhibitor ClTI-1 (55 aa).

The Kazal-like domain maps to Ser1 to Cys55. Cystine bridges form between Cys6–Cys37, Cys15–Cys34, and Cys23–Cys55.

It localises to the secreted. Inhibits trypsin and plasmin. The protein is Trypsin inhibitor ClTI-1 of Gallus gallus (Chicken).